A 380-amino-acid polypeptide reads, in one-letter code: Queuine tRNA-ribosyltransferase (380 aa).

Catalysis depends on Asp-96, which acts as the Proton acceptor. Residues 96-100 (DSGGF), Asp-150, Gln-193, and Gly-220 each bind substrate. The interval 251–257 (GVGAPDS) is RNA binding. Asp-270 (nucleophile) is an active-site residue. Residues 275-279 (TRIAR) form an RNA binding; important for wobble base 34 recognition region. Zn(2+) contacts are provided by Cys-308, Cys-310, Cys-313, and His-339.

Belongs to the queuine tRNA-ribosyltransferase family. In terms of assembly, homodimer. Within each dimer, one monomer is responsible for RNA recognition and catalysis, while the other monomer binds to the replacement base PreQ1. The cofactor is Zn(2+).

It carries out the reaction 7-aminomethyl-7-carbaguanine + guanosine(34) in tRNA = 7-aminomethyl-7-carbaguanosine(34) in tRNA + guanine. It functions in the pathway tRNA modification; tRNA-queuosine biosynthesis. Its function is as follows. Catalyzes the base-exchange of a guanine (G) residue with the queuine precursor 7-aminomethyl-7-deazaguanine (PreQ1) at position 34 (anticodon wobble position) in tRNAs with GU(N) anticodons (tRNA-Asp, -Asn, -His and -Tyr). Catalysis occurs through a double-displacement mechanism. The nucleophile active site attacks the C1' of nucleotide 34 to detach the guanine base from the RNA, forming a covalent enzyme-RNA intermediate. The proton acceptor active site deprotonates the incoming PreQ1, allowing a nucleophilic attack on the C1' of the ribose to form the product. After dissociation, two additional enzymatic reactions on the tRNA convert PreQ1 to queuine (Q), resulting in the hypermodified nucleoside queuosine (7-(((4,5-cis-dihydroxy-2-cyclopenten-1-yl)amino)methyl)-7-deazaguanosine). The protein is Queuine tRNA-ribosyltransferase of Streptococcus uberis (strain ATCC BAA-854 / 0140J).